Reading from the N-terminus, the 93-residue chain is Phosphocarrier protein HPr (93 aa).

The 88-residue stretch at 2–89 (AERRVNVGWA…KLVAEGLEEL (88 aa)) folds into the HPr domain. His-15 (pros-phosphohistidine intermediate) is an active-site residue.

This sequence belongs to the HPr family.

It localises to the cytoplasm. Its function is as follows. General (non sugar-specific) component of the phosphoenolpyruvate-dependent sugar phosphotransferase system (sugar PTS). This major carbohydrate active-transport system catalyzes the phosphorylation of incoming sugar substrates concomitantly with their translocation across the cell membrane. The phosphoryl group from phosphoenolpyruvate (PEP) is transferred to the phosphoryl carrier protein HPr by enzyme I. Phospho-HPr then transfers it to the PTS EIIA domain. The polypeptide is Phosphocarrier protein HPr (ptsH) (Streptomyces coelicolor (strain ATCC BAA-471 / A3(2) / M145)).